The sequence spans 436 residues: Serine--tRNA ligase (436 aa).

239-241 serves as a coordination point for L-serine; sequence TAE. Residue 270–272 participates in ATP binding; the sequence is RKE. An L-serine-binding site is contributed by Glu-293. 357–360 lines the ATP pocket; sequence EISS. Ser-392 contacts L-serine.

This sequence belongs to the class-II aminoacyl-tRNA synthetase family. Type-1 seryl-tRNA synthetase subfamily. As to quaternary structure, homodimer. The tRNA molecule binds across the dimer.

It is found in the cytoplasm. It carries out the reaction tRNA(Ser) + L-serine + ATP = L-seryl-tRNA(Ser) + AMP + diphosphate + H(+). The enzyme catalyses tRNA(Sec) + L-serine + ATP = L-seryl-tRNA(Sec) + AMP + diphosphate + H(+). The protein operates within aminoacyl-tRNA biosynthesis; selenocysteinyl-tRNA(Sec) biosynthesis; L-seryl-tRNA(Sec) from L-serine and tRNA(Sec): step 1/1. Catalyzes the attachment of serine to tRNA(Ser). Is also able to aminoacylate tRNA(Sec) with serine, to form the misacylated tRNA L-seryl-tRNA(Sec), which will be further converted into selenocysteinyl-tRNA(Sec). The protein is Serine--tRNA ligase of Leuconostoc citreum (strain KM20).